The primary structure comprises 295 residues: Small ribosomal subunit protein uS2 (295 aa).

Residues 264-295 form a disordered region; that stretch reads KFSKTKNIDEETNTEFEQALNDTDENKNADNA.

The protein belongs to the universal ribosomal protein uS2 family.

In Rickettsia akari (strain Hartford), this protein is Small ribosomal subunit protein uS2.